Consider the following 314-residue polypeptide: Olfactory receptor 52B4 (314 aa).

At 1–27 (MPTVNHSGTSHTVFHLLGIPGLQDQHM) the chain is on the extracellular side. N5 carries an N-linked (GlcNAc...) asparagine glycan. Residues 28-48 (WISIPFFISYVTALLGNSLLI) traverse the membrane as a helical segment. Residues 49–56 (FIILTKRS) are Cytoplasmic-facing. Residues 57–77 (LHEPMYLFLCMLAGADIVLST) traverse the membrane as a helical segment. Residues 78–101 (CTIPQALAIFWFRAGDISLDRCIT) lie on the Extracellular side of the membrane. C99 and C191 are disulfide-bonded. A helical membrane pass occupies residues 102-122 (QLFFIHSTFISESGILLVMAF). Residues 123 to 141 (DHYIAICYPLRYTTILTNA) lie on the Cytoplasmic side of the membrane. A helical membrane pass occupies residues 142 to 162 (LIKKICVTVSLRSYGTIFPII). At 163–198 (FLLKRLTFCQNNIIPHTFCEHIGLAKYACNDIRINI) the chain is on the extracellular side. Residues 199–219 (WYGFSILMSTVVLDVVLIFIS) traverse the membrane as a helical segment. At 220–239 (YMLILHAVFHMPSPDACHKA) the chain is on the cytoplasmic side. A helical transmembrane segment spans residues 240–260 (LNTFGSHVCIIILFYGSGIFT). Residues 261-275 (ILTQRFGRHIPPCIH) lie on the Extracellular side of the membrane. A helical transmembrane segment spans residues 276 to 296 (IPLANVCILAPPMLNPIIYGI). Residues 297 to 314 (KTKQIQEQVVQFLFIKQK) lie on the Cytoplasmic side of the membrane.

This sequence belongs to the G-protein coupled receptor 1 family.

Its subcellular location is the cell membrane. Functionally, odorant receptor. The sequence is that of Olfactory receptor 52B4 (OR52B4) from Homo sapiens (Human).